We begin with the raw amino-acid sequence, 473 residues long: Response regulator protein FleR (473 aa).

The 115-residue stretch at Lys-4–Ala-118 folds into the Response regulatory domain. 4-aspartylphosphate is present on Asp-53. The region spanning Pro-130 to Ile-359 is the Sigma-54 factor interaction domain. ATP is bound by residues Gly-158–Glu-165 and Ala-221–Glu-230.

In terms of biological role, member of the two-component regulatory system FleS/FleR that regulates the expression of multiple genes involved in flagellar synthesis, adhesion, swarming, motility and antibiotic resistance. May function as a transcriptional activator by direct binding to a cis-acting sequence upstream of the target genes. This is Response regulator protein FleR from Pseudomonas aeruginosa (strain ATCC 15692 / DSM 22644 / CIP 104116 / JCM 14847 / LMG 12228 / 1C / PRS 101 / PAO1).